Consider the following 908-residue polypeptide: Mechanosensitive ion channel protein 8 (908 aa).

The span at 1-25 (MDFRNSFKSHSSYKQIRSPGDQSEP) shows a compositional bias: polar residues. 4 disordered regions span residues 1–88 (MDFR…HTAV), 148–172 (DQEN…SFDA), 190–221 (VAGS…LQEE), and 242–265 (VKTR…WRSG). Over residues 31–70 (PILHDHHPDHSGMVVDDQKPDSTRSSLDDGRNAPVERDAS) the composition is skewed to basic and acidic residues. Composition is skewed to polar residues over residues 75-85 (QDNTTGTSTDH) and 156-171 (HQTM…TSFD). Low complexity predominate over residues 196–206 (SSSSHSSSSSS). Residues 207 to 218 (ATMRTNQDQPQL) show a composition bias toward polar residues. Basic and acidic residues predominate over residues 247–256 (RLQDPPREEE). The next 6 membrane-spanning stretches (helical) occupy residues 298 to 318 (AITL…ACSL), 341 to 361 (LVLI…VFFI), 381 to 401 (AVQN…LFDK), 411 to 431 (FLPY…LWLI), 673 to 693 (MINI…LEIA), and 709 to 729 (AFIF…LFIV).

This sequence belongs to the MscS (TC 1.A.23) family. As to expression, expressed in tricellular and mature pollen, and in germinating tube. Not detected in leaves or roots.

It is found in the cell membrane. It localises to the endomembrane system. Its activity is regulated as follows. Not regulated by MgCl(2), ruthenium red or tetramethylammonium-Cl. In terms of biological role, mechanosensitive channel that opens in response to stretch forces in the membrane lipid bilayer. Exhibits a 6.3-fold preference for chloride over sodium. Regulates osmotic forces during pollen hydration and germination. This is Mechanosensitive ion channel protein 8 from Arabidopsis thaliana (Mouse-ear cress).